We begin with the raw amino-acid sequence, 126 residues long: C-type natriuretic peptide (126 aa).

The first 23 residues, 1–23 (MHLSQLLACALLLSLLSLRPSEA), serve as a signal peptide directing secretion. Residues 20-71 (PSEAKPGAPPKVPRTPPGEEVAEPQAAGGGQKKGDKTPGGGGANLKDDRSRL) are disordered. Residues 24–73 (KPGAPPKVPRTPPGEEVAEPQAAGGGQKKGDKTPGGGGANLKDDRSRLLR) constitute a propeptide that is removed on maturation. Residues 26-35 (GAPPKVPRTP) show a composition bias toward pro residues. Over residues 46-62 (AGGGQKKGDKTPGGGGA) the composition is skewed to gly residues. Cys110 and Cys126 are disulfide-bonded.

The protein belongs to the natriuretic peptide family. Degraded by IDE (in vitro).

It is found in the secreted. Functionally, hormone which plays a role in endochondral ossification through regulation of cartilaginous growth plate chondrocytes proliferation and differentiation. May also be vasoactive and natriuretic. Acts by specifically binding and stimulating NPR2 to produce cGMP. Binds the clearance receptor NPR3. This Ovis aries (Sheep) protein is C-type natriuretic peptide (NPPC).